Consider the following 269-residue polypeptide: 3-methyl-2-oxobutanoate hydroxymethyltransferase (269 aa).

The Mg(2+) site is built by Asp-48 and Asp-87. 3-methyl-2-oxobutanoate is bound by residues 48–49 (DS), Asp-87, and Lys-116. Glu-118 lines the Mg(2+) pocket. The active-site Proton acceptor is Glu-185.

The protein belongs to the PanB family. In terms of assembly, homodecamer; pentamer of dimers. The cofactor is Mg(2+).

It is found in the cytoplasm. The enzyme catalyses 3-methyl-2-oxobutanoate + (6R)-5,10-methylene-5,6,7,8-tetrahydrofolate + H2O = 2-dehydropantoate + (6S)-5,6,7,8-tetrahydrofolate. It functions in the pathway cofactor biosynthesis; (R)-pantothenate biosynthesis; (R)-pantoate from 3-methyl-2-oxobutanoate: step 1/2. In terms of biological role, catalyzes the reversible reaction in which hydroxymethyl group from 5,10-methylenetetrahydrofolate is transferred onto alpha-ketoisovalerate to form ketopantoate. The protein is 3-methyl-2-oxobutanoate hydroxymethyltransferase of Campylobacter curvus (strain 525.92).